The sequence spans 445 residues: Zinc finger protein SHOOT GRAVITROPISM 5 (445 aa).

A compositionally biased stretch (low complexity) spans 22 to 31; it reads SSSDPFLSSS. Residues 22-59 form a disordered region; that stretch reads SSSDPFLSSSENGVTTTNTSTQKRKRRPAGTPDPDAEV. Residues 32-42 are compositionally biased toward polar residues; the sequence is ENGVTTTNTST. 3 consecutive C2H2-type zinc fingers follow at residues 73–95, 115–145, and 151–178; these read YICE…RRRH, YVCP…RRKH, and WVCE…TRGH. Zn(2+) contacts are provided by Cys153, Cys156, His169, Cys173, Cys180, Cys182, His195, and Cys199. The segment at 178–201 adopts a CCHC-type 2; atypical zinc-finger fold; that stretch reads HSCDCGRVFSRVESFIEHQDNCSA. Residues 188 to 200 form an SHR-binding region; sequence RVESFIEHQDNCS. Disordered regions lie at residues 203 to 253 and 281 to 314; these read RVHR…LEGR and SSNQ…LNLS. The span at 214–248 shows a compositional bias: polar residues; sequence TAVTVPACSSRTASTVSTPSSETNYGGTVAVTTPQ. Over residues 281–293 the composition is skewed to low complexity; sequence SSNQNPNQENQQQ. Residues 340-397 are a coiled coil; it reads MKIAMKEKAYAEEAKREAKRQREIAENEFANAKKIRQKAQAELERAKFLKEQSMKKIS.

Mainly expressed in the endodermis, the gravity-sensing tissue in inflorescence stems. Mostly present in stems and flowers, and, to a lower extent, in seedlings, hypocotyls, roots and the shoot apical meristem (SAM).

The protein localises to the nucleus. Its function is as follows. Transcription factor involved in inflorescence stems gravitropism, probably by regulating starch accumulation in amyloplasts of graviperceptive cells. Required for stem circumnutation movements. Regulates lateral organ morphogenesis and gravitropic responses. Acts cooperatively with IDD16 to control silique and branche orientation. Involved in the establishment of auxin gradients through the regulation of auxin biosynthesis and transport. This Arabidopsis thaliana (Mouse-ear cress) protein is Zinc finger protein SHOOT GRAVITROPISM 5.